The following is a 142-amino-acid chain: Phosphoribosyl-AMP cyclohydrolase (142 aa).

Aspartate 85 contacts Mg(2+). Cysteine 86 provides a ligand contact to Zn(2+). Residues aspartate 87 and aspartate 89 each contribute to the Mg(2+) site. Residues cysteine 102 and cysteine 109 each coordinate Zn(2+). A disordered region spans residues glycine 120–proline 142.

Belongs to the PRA-CH family. Homodimer. It depends on Mg(2+) as a cofactor. Requires Zn(2+) as cofactor.

Its subcellular location is the cytoplasm. It catalyses the reaction 1-(5-phospho-beta-D-ribosyl)-5'-AMP + H2O = 1-(5-phospho-beta-D-ribosyl)-5-[(5-phospho-beta-D-ribosylamino)methylideneamino]imidazole-4-carboxamide. It participates in amino-acid biosynthesis; L-histidine biosynthesis; L-histidine from 5-phospho-alpha-D-ribose 1-diphosphate: step 3/9. In terms of biological role, catalyzes the hydrolysis of the adenine ring of phosphoribosyl-AMP. This is Phosphoribosyl-AMP cyclohydrolase from Acidothermus cellulolyticus (strain ATCC 43068 / DSM 8971 / 11B).